A 333-amino-acid polypeptide reads, in one-letter code: Aspartate carbamoyltransferase catalytic subunit (333 aa).

Carbamoyl phosphate-binding residues include arginine 61 and threonine 62. Lysine 89 is an L-aspartate binding site. Carbamoyl phosphate contacts are provided by arginine 111, histidine 144, and glutamine 147. The L-aspartate site is built by arginine 184 and arginine 248. 2 residues coordinate carbamoyl phosphate: glycine 289 and proline 290.

This sequence belongs to the aspartate/ornithine carbamoyltransferase superfamily. ATCase family. In terms of assembly, heterododecamer (2C3:3R2) of six catalytic PyrB chains organized as two trimers (C3), and six regulatory PyrI chains organized as three dimers (R2).

It carries out the reaction carbamoyl phosphate + L-aspartate = N-carbamoyl-L-aspartate + phosphate + H(+). It participates in pyrimidine metabolism; UMP biosynthesis via de novo pathway; (S)-dihydroorotate from bicarbonate: step 2/3. In terms of biological role, catalyzes the condensation of carbamoyl phosphate and aspartate to form carbamoyl aspartate and inorganic phosphate, the committed step in the de novo pyrimidine nucleotide biosynthesis pathway. The sequence is that of Aspartate carbamoyltransferase catalytic subunit from Trichormus variabilis (strain ATCC 29413 / PCC 7937) (Anabaena variabilis).